The primary structure comprises 386 residues: Cytochrome b (386 aa).

The next 4 helical transmembrane spans lie at 32–52, 76–98, 113–133, and 179–199; these read TGSL…FTAM, YLIR…GHIG, VWVI…TGYC, and FFAL…MHLM. Positions 82 and 96 each coordinate heme b. The heme b site is built by His183 and His197. His202 contributes to the a ubiquinone binding site. 4 consecutive transmembrane segments (helical) span residues 225–245, 289–309, 321–341, and 348–368; these read FVFK…TFVF, LGGV…PVTD, FSKT…QLGQ, and FIEM…VLVP.

Belongs to the cytochrome b family. Fungal cytochrome b-c1 complex contains 10 subunits; 3 respiratory subunits, 2 core proteins and 5 low-molecular weight proteins. Cytochrome b-c1 complex is a homodimer. It depends on heme b as a cofactor.

It is found in the mitochondrion inner membrane. Its function is as follows. Component of the ubiquinol-cytochrome c reductase complex (complex III or cytochrome b-c1 complex) that is part of the mitochondrial respiratory chain. The b-c1 complex mediates electron transfer from ubiquinol to cytochrome c. Contributes to the generation of a proton gradient across the mitochondrial membrane that is then used for ATP synthesis. This is Cytochrome b (COB) from Wickerhamomyces pijperi (Yeast).